We begin with the raw amino-acid sequence, 1073 residues long: DNA-directed RNA polymerase subunit beta (1073 aa).

It belongs to the RNA polymerase beta chain family. In terms of assembly, in plastids the minimal PEP RNA polymerase catalytic core is composed of four subunits: alpha, beta, beta', and beta''. When a (nuclear-encoded) sigma factor is associated with the core the holoenzyme is formed, which can initiate transcription.

Its subcellular location is the plastid. It is found in the chloroplast. The enzyme catalyses RNA(n) + a ribonucleoside 5'-triphosphate = RNA(n+1) + diphosphate. DNA-dependent RNA polymerase catalyzes the transcription of DNA into RNA using the four ribonucleoside triphosphates as substrates. The chain is DNA-directed RNA polymerase subunit beta from Aethionema cordifolium (Lebanon stonecress).